Here is a 211-residue protein sequence, read N- to C-terminus: Pyridoxine/pyridoxamine 5'-phosphate oxidase (211 aa).

Residues 7–10 and lysine 65 contribute to the substrate site; that span reads RREY. FMN is bound by residues 60-65, 75-76, arginine 81, lysine 82, and glutamine 104; these read RIVLLK and YT. Tyrosine 122, arginine 126, and serine 130 together coordinate substrate. Residues 139-140 and tryptophan 184 contribute to the FMN site; that span reads QS. 190-192 is a substrate binding site; it reads RLH. Arginine 194 lines the FMN pocket.

The protein belongs to the pyridoxamine 5'-phosphate oxidase family. As to quaternary structure, homodimer. The cofactor is FMN.

The catalysed reaction is pyridoxamine 5'-phosphate + O2 + H2O = pyridoxal 5'-phosphate + H2O2 + NH4(+). It carries out the reaction pyridoxine 5'-phosphate + O2 = pyridoxal 5'-phosphate + H2O2. Its pathway is cofactor metabolism; pyridoxal 5'-phosphate salvage; pyridoxal 5'-phosphate from pyridoxamine 5'-phosphate: step 1/1. It participates in cofactor metabolism; pyridoxal 5'-phosphate salvage; pyridoxal 5'-phosphate from pyridoxine 5'-phosphate: step 1/1. Functionally, catalyzes the oxidation of either pyridoxine 5'-phosphate (PNP) or pyridoxamine 5'-phosphate (PMP) into pyridoxal 5'-phosphate (PLP). The sequence is that of Pyridoxine/pyridoxamine 5'-phosphate oxidase from Vibrio parahaemolyticus serotype O3:K6 (strain RIMD 2210633).